A 375-amino-acid polypeptide reads, in one-letter code: uncharacterized protein (375 aa).

This sequence belongs to the IMPDH/GMPR family.

This is an uncharacterized protein from Mycobacterium tuberculosis (strain CDC 1551 / Oshkosh).